The primary structure comprises 520 residues: MKEAVKNVKPKVPAKKRIITGSKTKKKVFVKKKPPDKKPLKKPVKKTVKTYKLKSIYVSNKDLKMSKWIPTPKKEFTEIETNSWYEHRKFENPNGSPIQSYNKIVPVVPPESIKQQNLANKRKKTNRPIVFISSEKIRIYPTKEQQKILQTWFRLFACMYNSSIDYINSKKVVLESGRINVAATRKVCNKISVRKALKTIRDNLIKSTNPSIMTHIMDEAIGLACSNYKTCLTNYIEGQIKKFDIKPWSISKRRKIIVIEPGYFKGNSFCPTVFPKMKSSKPLIMIDKTVTLQYDSDTRKYILFVPRVTPKYSVNKEKNSCGIDPGLRDFLTVYSENETQSICPIEIVVNTTKNEYKKIDKINEIIKTKPNLNSKRKKKLNRGLRKYHRRVTNKMKDMHYKVSHELVNTFDKICIGKLNVKSILSKANTVLKSALKRKLATLSFYRFTQRLTHMGYKYGTEVVNVNEYLTTKTCSNCGKIKDLGASKIYECESCGMYADRDENAAKNILKVGLKPWYKQK.

A disordered region spans residues Lys23–Val44. Residues Cys474, Cys477, Cys491, and Cys494 each coordinate Zn(2+).

The protein in the central section; belongs to the transposase 2 family. In the C-terminal section; belongs to the transposase 35 family.

The polypeptide is TnpB-like protein L770 (Acanthamoeba polyphaga mimivirus (APMV)).